The following is a 629-amino-acid chain: Dolichyl-diphosphooligosaccharide--protein glycosyltransferase subunit 2 (629 aa).

An N-terminal signal peptide occupies residues 1 to 22; it reads MAPPGSRTVLLLALTIIARTQA. The Lumenal portion of the chain corresponds to 23-541; that stretch reads LKPTHYLTKH…RDPEKRPPTV (519 aa). N-linked (GlcNAc...) asparagine glycosylation occurs at asparagine 106. A Glycyl lysine isopeptide (Lys-Gly) (interchain with G-Cter in ubiquitin) cross-link involves residue lysine 154. The chain crosses the membrane as a helical span at residues 542–562; that stretch reads VSNTFTGLILSPLLLLFALWI. The Cytoplasmic segment spans residues 563–570; it reads RIGAKISN. A helical membrane pass occupies residues 571–591; the sequence is FTFGLTIIFHLGHAMLAMYVY. The Lumenal portion of the chain corresponds to 592 to 594; it reads WTQ. Residues 595-615 traverse the membrane as a helical segment; sequence LNMFQTLKYLAILGSVTFLAG. At 616–629 the chain is on the cytoplasmic side; sequence NRMLAQQAIKRTAH.

The protein belongs to the SWP1 family. As to quaternary structure, component of the oligosaccharyltransferase (OST) complex. OST exists in two different complex forms which contain common core subunits RPN1, RPN2, OST48, OST4, DAD1 and TMEM258, either STT3A or STT3B as catalytic subunits, and form-specific accessory subunits. STT3A complex assembly occurs through the formation of 3 subcomplexes. Subcomplex 1 contains RPN1 and TMEM258, subcomplex 2 contains the STT3A-specific subunits STT3A, DC2/OSTC, and KCP2 as well as the core subunit OST4, and subcomplex 3 contains RPN2, DAD1, and OST48. The STT3A complex can form stable complexes with the Sec61 complex or with both the Sec61 and TRAP complexes. Interacts with DDI2. Interacts with TMEM35A/NACHO.

The protein localises to the endoplasmic reticulum. It is found in the endoplasmic reticulum membrane. It participates in protein modification; protein glycosylation. In terms of biological role, subunit of the oligosaccharyl transferase (OST) complex that catalyzes the initial transfer of a defined glycan (Glc(3)Man(9)GlcNAc(2) in eukaryotes) from the lipid carrier dolichol-pyrophosphate to an asparagine residue within an Asn-X-Ser/Thr consensus motif in nascent polypeptide chains, the first step in protein N-glycosylation. N-glycosylation occurs cotranslationally and the complex associates with the Sec61 complex at the channel-forming translocon complex that mediates protein translocation across the endoplasmic reticulum (ER). All subunits are required for a maximal enzyme activity. In Sus scrofa (Pig), this protein is Dolichyl-diphosphooligosaccharide--protein glycosyltransferase subunit 2.